The sequence spans 216 residues: ATP-dependent Clp protease proteolytic subunit (216 aa).

Ser120 acts as the Nucleophile in catalysis. The active site involves His145.

The protein belongs to the peptidase S14 family. Fourteen ClpP subunits assemble into 2 heptameric rings which stack back to back to give a disk-like structure with a central cavity, resembling the structure of eukaryotic proteasomes.

The protein localises to the cytoplasm. It carries out the reaction Hydrolysis of proteins to small peptides in the presence of ATP and magnesium. alpha-casein is the usual test substrate. In the absence of ATP, only oligopeptides shorter than five residues are hydrolyzed (such as succinyl-Leu-Tyr-|-NHMec, and Leu-Tyr-Leu-|-Tyr-Trp, in which cleavage of the -Tyr-|-Leu- and -Tyr-|-Trp bonds also occurs).. Cleaves peptides in various proteins in a process that requires ATP hydrolysis. Has a chymotrypsin-like activity. Plays a major role in the degradation of misfolded proteins. The chain is ATP-dependent Clp protease proteolytic subunit from Cupriavidus necator (strain ATCC 17699 / DSM 428 / KCTC 22496 / NCIMB 10442 / H16 / Stanier 337) (Ralstonia eutropha).